The sequence spans 400 residues: Chaperone protein DnaJ (400 aa).

One can recognise a J domain in the interval 4–69 (DYYETLGVTR…DKRRRYDQFG (66 aa)). The segment at 156–237 (GVEKTLKVKR…CYGEGIKLGE (82 aa)) adopts a CR-type zinc-finger fold. Residues cysteine 169, cysteine 172, cysteine 185, cysteine 188, cysteine 211, cysteine 214, cysteine 225, and cysteine 228 each contribute to the Zn(2+) site. CXXCXGXG motif repeat units follow at residues 169 to 176 (CEVCNGTG), 185 to 192 (CQTCHGSG), 211 to 218 (CPTCGGEG), and 225 to 232 (CTACYGEG).

It belongs to the DnaJ family. As to quaternary structure, homodimer. The cofactor is Zn(2+).

It is found in the cytoplasm. Participates actively in the response to hyperosmotic and heat shock by preventing the aggregation of stress-denatured proteins and by disaggregating proteins, also in an autonomous, DnaK-independent fashion. Unfolded proteins bind initially to DnaJ; upon interaction with the DnaJ-bound protein, DnaK hydrolyzes its bound ATP, resulting in the formation of a stable complex. GrpE releases ADP from DnaK; ATP binding to DnaK triggers the release of the substrate protein, thus completing the reaction cycle. Several rounds of ATP-dependent interactions between DnaJ, DnaK and GrpE are required for fully efficient folding. Also involved, together with DnaK and GrpE, in the DNA replication of plasmids through activation of initiation proteins. The polypeptide is Chaperone protein DnaJ (Chlorobium chlorochromatii (strain CaD3)).